Here is a 381-residue protein sequence, read N- to C-terminus: Heterogeneous nuclear rnp K-like protein 2 (381 aa).

Positions 1-34 (MSQFFEAATPVAIPTNNTNGGSSDAGSAATGGAP) are disordered. Residues 15 to 33 (TNNTNGGSSDAGSAATGGA) are compositionally biased toward low complexity. KH domains lie at 43–107 (TINH…IGDI), 156–221 (IGYV…LIEI), and 258–326 (NTRI…ESML). A disordered region spans residues 357–381 (RSDSASFLEEKEEPQKNHDNKEEQS). Phosphoserine is present on residues Ser358, Ser360, and Ser362. Residues 369–381 (EPQKNHDNKEEQS) show a composition bias toward basic and acidic residues.

It belongs to the HEK2 family. Binds RNA. Post-translationally, phosphorylated by the plasma membrane-Anchored casein kinase YCK1. Phosphorylation at its C-terminus reduces its RNA-binding capacity.

The protein localises to the cytoplasm. The protein resides in the P-body. It is found in the nucleus. It localises to the chromosome. Its subcellular location is the telomere. RNA-binding protein involved in the correct localization of transcripts in the cell. RNA localization is a widespread mechanism for achieving localized protein synthesis. Required for the asymmetric localization to the daughter cell nucleus of the ASH1 transcript, coding for a specific repressor of transcription. Overexpression inhibits translation of the ASH1 transcript. Involved in the stability of transcripts, like the MTL1 mRNA. Involved in structural and functional organization of telomeric chromatin and regulates silencing at the HMR locus. The protein is Heterogeneous nuclear rnp K-like protein 2 (HEK2) of Saccharomyces cerevisiae (strain RM11-1a) (Baker's yeast).